The following is a 291-amino-acid chain: N-acetylmannosamine kinase (291 aa).

ATP-binding positions include 5–12 and 132–139; these read AIDIGGTK and GVGGGVVS. Residues His-156, Cys-166, Cys-168, and Cys-173 each contribute to the Zn(2+) site.

This sequence belongs to the ROK (NagC/XylR) family. NanK subfamily. Homodimer.

The enzyme catalyses an N-acyl-D-mannosamine + ATP = an N-acyl-D-mannosamine 6-phosphate + ADP + H(+). It participates in amino-sugar metabolism; N-acetylneuraminate degradation; D-fructose 6-phosphate from N-acetylneuraminate: step 2/5. In terms of biological role, catalyzes the phosphorylation of N-acetylmannosamine (ManNAc) to ManNAc-6-P. The protein is N-acetylmannosamine kinase of Escherichia coli O1:K1 / APEC.